The primary structure comprises 73 residues: uncharacterized protein (73 aa).

Residues 1-28 (MKFLLSVIAGLLILALYLFWKVQPPVWI) form the signal peptide.

This is an uncharacterized protein from Bacillus subtilis (strain 168).